The primary structure comprises 207 residues: Large ribosomal subunit protein bL25 (207 aa).

Residues 185 to 207 are disordered; the sequence is DLEEETGEAAAEAEAPAEEGAES.

The protein belongs to the bacterial ribosomal protein bL25 family. CTC subfamily. As to quaternary structure, part of the 50S ribosomal subunit; part of the 5S rRNA/L5/L18/L25 subcomplex. Contacts the 5S rRNA. Binds to the 5S rRNA independently of L5 and L18.

In terms of biological role, this is one of the proteins that binds to the 5S RNA in the ribosome where it forms part of the central protuberance. In Rhodococcus jostii (strain RHA1), this protein is Large ribosomal subunit protein bL25.